A 545-amino-acid chain; its full sequence is CTP synthase (545 aa).

The tract at residues 1–266 (MATNYIFVTG…DDFVCERFRL (266 aa)) is amidoligase domain. S14 lines the CTP pocket. Residue S14 participates in UTP binding. ATP contacts are provided by residues 15-20 (SLGKGI) and D72. Positions 72 and 140 each coordinate Mg(2+). Residues 147 to 149 (DIE), 187 to 192 (KTKPTQ), and K223 contribute to the CTP site. UTP is bound by residues 187–192 (KTKPTQ) and K223. ATP is bound at residue 239–241 (KDV). The Glutamine amidotransferase type-1 domain maps to 291 to 542 (TIGMVGKYTE…VKAAYENHKK (252 aa)). G352 contacts L-glutamine. C379 functions as the Nucleophile; for glutamine hydrolysis in the catalytic mechanism. Residues 380 to 383 (LGMQ), E403, and R470 each bind L-glutamine. Catalysis depends on residues H515 and E517.

Belongs to the CTP synthase family. As to quaternary structure, homotetramer.

The catalysed reaction is UTP + L-glutamine + ATP + H2O = CTP + L-glutamate + ADP + phosphate + 2 H(+). The enzyme catalyses L-glutamine + H2O = L-glutamate + NH4(+). It carries out the reaction UTP + NH4(+) + ATP = CTP + ADP + phosphate + 2 H(+). Its pathway is pyrimidine metabolism; CTP biosynthesis via de novo pathway; CTP from UDP: step 2/2. Its activity is regulated as follows. Allosterically activated by GTP, when glutamine is the substrate; GTP has no effect on the reaction when ammonia is the substrate. The allosteric effector GTP functions by stabilizing the protein conformation that binds the tetrahedral intermediate(s) formed during glutamine hydrolysis. Inhibited by the product CTP, via allosteric rather than competitive inhibition. In terms of biological role, catalyzes the ATP-dependent amination of UTP to CTP with either L-glutamine or ammonia as the source of nitrogen. Regulates intracellular CTP levels through interactions with the four ribonucleotide triphosphates. The polypeptide is CTP synthase (Haemophilus influenzae (strain PittEE)).